Here is a 486-residue protein sequence, read N- to C-terminus: MDIFYNLIKCLIFSTYWLLIANITFRVLIKRRNIPYSMSWLLTIYIIPFIGISIWFFFGELYLGKRQKKIANRIWSISNKWLHELKSCTYIFQIKNSEVATSIFQLCKNRQGLHGIKSKKIKLLTNTKKIMQILIRDIYLARKNIEMVFYIWKPGGMADDVAIALIDSAKRGIHCRLMLDSAGSIEFFQSPWVEIMRKSGIQVVEALKVNLLRVFLRRVDVRQHRKIILIDNYIAYSGSMNLVDPYLFKKSSGIGQWIDLMTRIEGPIATTMGIIYSCDWEIETGLKILPQLPNKKMLENQSNKNASIQVIASGPGFLKNMIHQALLTAIYSAKRELIITTPYLVPSEDLLEAICTAAQRGVEVSIIIPLYHDSILVKWASRVFFSELLEAGVKIFQFQKGLLHSKSILVDQQLSLIGTVNLDMRSLWLNFEITLVIDDSDFGRNLFCIQNKYISDSQLIDKKAWSMRAYWKRILEKIFYFLSPLL.

Transmembrane regions (helical) follow at residues 3–23 and 38–58; these read IFYNLIKCLIFSTYWLLIANI and MSWLLTIYIIPFIGISIWFFF. PLD phosphodiesterase domains are found at residues 219–246 and 399–426; these read VDVRQHRKIILIDNYIAYSGSMNLVDPY and QKGLLHSKSILVDQQLSLIGTVNLDMRS. Active-site residues include histidine 224, lysine 226, aspartate 231, histidine 404, lysine 406, and aspartate 411.

It belongs to the phospholipase D family. Cardiolipin synthase subfamily. ClsA sub-subfamily.

The protein localises to the cell inner membrane. It catalyses the reaction 2 a 1,2-diacyl-sn-glycero-3-phospho-(1'-sn-glycerol) = a cardiolipin + glycerol. Its function is as follows. Catalyzes the reversible phosphatidyl group transfer from one phosphatidylglycerol molecule to another to form cardiolipin (CL) (diphosphatidylglycerol) and glycerol. This chain is Cardiolipin synthase A, found in Buchnera aphidicola subsp. Acyrthosiphon pisum (strain 5A).